The following is a 107-amino-acid chain: Large ribosomal subunit protein bL21 (107 aa).

Belongs to the bacterial ribosomal protein bL21 family. As to quaternary structure, part of the 50S ribosomal subunit. Contacts protein L20.

Functionally, this protein binds to 23S rRNA in the presence of protein L20. The chain is Large ribosomal subunit protein bL21 from Chlamydia muridarum (strain MoPn / Nigg).